The primary structure comprises 258 residues: Imidazole glycerol phosphate synthase subunit HisF (258 aa).

Residues D11 and D130 contribute to the active site.

It belongs to the HisA/HisF family. As to quaternary structure, heterodimer of HisH and HisF.

The protein resides in the cytoplasm. The catalysed reaction is 5-[(5-phospho-1-deoxy-D-ribulos-1-ylimino)methylamino]-1-(5-phospho-beta-D-ribosyl)imidazole-4-carboxamide + L-glutamine = D-erythro-1-(imidazol-4-yl)glycerol 3-phosphate + 5-amino-1-(5-phospho-beta-D-ribosyl)imidazole-4-carboxamide + L-glutamate + H(+). It participates in amino-acid biosynthesis; L-histidine biosynthesis; L-histidine from 5-phospho-alpha-D-ribose 1-diphosphate: step 5/9. In terms of biological role, IGPS catalyzes the conversion of PRFAR and glutamine to IGP, AICAR and glutamate. The HisF subunit catalyzes the cyclization activity that produces IGP and AICAR from PRFAR using the ammonia provided by the HisH subunit. The protein is Imidazole glycerol phosphate synthase subunit HisF of Buchnera aphidicola subsp. Baizongia pistaciae (strain Bp).